Reading from the N-terminus, the 372-residue chain is NAD(P)H-quinone oxidoreductase subunit 1 (372 aa).

Helical transmembrane passes span 27-47, 97-117, 128-148, 166-186, 204-224, 266-286, 308-328, and 347-367; these read LIWLPLPMLLVLTAAMVGVLV, LLFTLGPVLVLVPVILSWLIV, VGIGIFLWISLSSIQPIGLLM, AAQSISYEIPLALAVLAVVMM, LLSWNVWRQPVGFLIFWICAL, VLSSLLVAVLYLGGWGFPIPV, SVGIVMTVLKAYLLVFLAILL, and FLLPIALGNLLITAALKLAFP.

Belongs to the complex I subunit 1 family. In terms of assembly, NDH-1 is composed of at least 11 different subunits.

It localises to the cellular thylakoid membrane. The catalysed reaction is a plastoquinone + NADH + (n+1) H(+)(in) = a plastoquinol + NAD(+) + n H(+)(out). It carries out the reaction a plastoquinone + NADPH + (n+1) H(+)(in) = a plastoquinol + NADP(+) + n H(+)(out). NDH-1 shuttles electrons from an unknown electron donor, via FMN and iron-sulfur (Fe-S) centers, to quinones in the respiratory and/or the photosynthetic chain. The immediate electron acceptor for the enzyme in this species is believed to be plastoquinone. Couples the redox reaction to proton translocation, and thus conserves the redox energy in a proton gradient. The polypeptide is NAD(P)H-quinone oxidoreductase subunit 1 (Prochlorococcus marinus (strain MIT 9313)).